Reading from the N-terminus, the 607-residue chain is Pescadillo homolog (607 aa).

One can recognise a BRCT domain in the interval 320-413 (KLKNLFKGLK…KLLPVNKYLI (94 aa)). Positions 486–607 (EALNSGALEE…KTQRKEILAK (122 aa)) are disordered. Residues 495-511 (EAPEEEDDDEEAPEEDE) show a composition bias toward acidic residues. Residues 530-549 (IFKENPSEQKKLTKQEEALR) show a composition bias toward basic and acidic residues. Residues 551–562 (RMVKSRHKKLYR) are compositionally biased toward basic residues. Residues 563–607 (KMLEKQKKQTKEANLLKEKRQQIDKKQRVEQTQKRKTQRKEILAK) are compositionally biased toward basic and acidic residues.

Belongs to the pescadillo family.

The protein localises to the nucleus. The protein resides in the nucleolus. It localises to the nucleoplasm. Functionally, required for maturation of ribosomal RNAs and formation of the large ribosomal subunit. The chain is Pescadillo homolog from Culex quinquefasciatus (Southern house mosquito).